A 522-amino-acid polypeptide reads, in one-letter code: Glutamate--cysteine ligase (522 aa).

The protein belongs to the glutamate--cysteine ligase type 1 family. Type 1 subfamily.

It catalyses the reaction L-cysteine + L-glutamate + ATP = gamma-L-glutamyl-L-cysteine + ADP + phosphate + H(+). It participates in sulfur metabolism; glutathione biosynthesis; glutathione from L-cysteine and L-glutamate: step 1/2. This Vibrio campbellii (strain ATCC BAA-1116) protein is Glutamate--cysteine ligase.